Reading from the N-terminus, the 632-residue chain is Chaperone protein HtpG (632 aa).

Residues 1–339 form an a; substrate-binding region; the sequence is MTQQTMSFQA…SSDLPLNVSR (339 aa). The b stretch occupies residues 340-559; the sequence is EILQESRDVK…DNDMSGYLQR (220 aa). The segment at 560–632 is c; sequence MLKAAGQNAP…TNALLLSRAA (73 aa).

It belongs to the heat shock protein 90 family. As to quaternary structure, homodimer.

The protein resides in the cytoplasm. Functionally, molecular chaperone. Has ATPase activity. The polypeptide is Chaperone protein HtpG (Burkholderia thailandensis (strain ATCC 700388 / DSM 13276 / CCUG 48851 / CIP 106301 / E264)).